The following is a 427-amino-acid chain: Adenylosuccinate synthetase (427 aa).

Residues 12 to 18 and 40 to 42 contribute to the GTP site; these read GDEGKGK and GHT. Aspartate 13 acts as the Proton acceptor in catalysis. Mg(2+) is bound by residues aspartate 13 and glycine 40. IMP is bound by residues 13-16, 38-41, threonine 128, arginine 142, glutamine 223, threonine 238, and arginine 302; these read DEGK and NAGH. Histidine 41 functions as the Proton donor in the catalytic mechanism. A substrate-binding site is contributed by 298–304; the sequence is VTTGRDR. Residues arginine 304, 330-332, and 412-414 contribute to the GTP site; these read KLD and GVG.

This sequence belongs to the adenylosuccinate synthetase family. In terms of assembly, homodimer. Requires Mg(2+) as cofactor.

It is found in the cytoplasm. It catalyses the reaction IMP + L-aspartate + GTP = N(6)-(1,2-dicarboxyethyl)-AMP + GDP + phosphate + 2 H(+). It participates in purine metabolism; AMP biosynthesis via de novo pathway; AMP from IMP: step 1/2. In terms of biological role, plays an important role in the de novo pathway of purine nucleotide biosynthesis. Catalyzes the first committed step in the biosynthesis of AMP from IMP. This is Adenylosuccinate synthetase from Streptomyces griseus subsp. griseus (strain JCM 4626 / CBS 651.72 / NBRC 13350 / KCC S-0626 / ISP 5235).